A 350-amino-acid chain; its full sequence is NAD-dependent protein deacetylase sirtuin-2 (350 aa).

Residues 4-14 (LRNLFTQTLGL) carry the Nuclear export signal motif. The residue at position 16 (serine 16) is a Phosphoserine. Positions 20–301 (RLLDELTLEG…LALADLLGWK (282 aa)) constitute a Deacetylase sirtuin-type domain. Residues 48–52 (AGIST) and 58–60 (DFR) each bind NAD(+). Serine 63 bears the Phosphoserine mark. 130–133 (QNID) is an NAD(+) binding site. The Proton acceptor role is filled by histidine 150. 2 residues coordinate Zn(2+): cysteine 158 and cysteine 163. Serine 170 carries the phosphoserine modification. Positions 184 and 187 each coordinate Zn(2+). Residues 225-226 (TS), 249-251 (NKE), and cysteine 287 contribute to the NAD(+) site. Positions 312 to 350 (ANIDAQSGSQASNPSATVSPRKSPPPAKEAARTKEKEEH) are disordered. Positions 315–331 (DAQSGSQASNPSATVSP) are enriched in polar residues. Phosphoserine is present on residues serine 330 and serine 334. Over residues 340–350 (EAARTKEKEEH) the composition is skewed to basic and acidic residues.

The protein belongs to the sirtuin family. Class I subfamily. In terms of assembly, interacts with CDC20, FOXO3 and FZR1. Associates with microtubules in primary cortical mature neurons. Homotrimer. Interacts (via both phosphorylated, unphosphorylated, active or inactive forms) with HDAC6; the interaction is necessary for the complex to interact with alpha-tubulin, suggesting that these proteins belong to a large complex that deacetylates the cytoskeleton. Interacts with FOXO1; the interaction is disrupted upon serum-starvation or oxidative stress, leading to increased level of acetylated FOXO1 and induction of autophagy. Interacts with RELA; the interaction occurs in the cytoplasm and is increased in a TNF-alpha-dependent manner. Interacts with HOXA10; the interaction is direct. Interacts with YWHAB and YWHAG; the interactions occur in a AKT-dependent manner and increase SIRT2-dependent TP53 deacetylation. Interacts with MAPK1/ERK2 and MAPK3/ERK1; the interactions increase SIRT2 stability and deacetylation activity. Interacts (phosphorylated form) with KMT5A isoform 2; the interaction is direct, stimulates KMT5A-mediated methyltransferase activity on histone at 'Lys-20' (H4K20me1) and is increased in a H(2)O(2)-induced oxidative stress-dependent manner. Interacts with G6PD; the interaction is enhanced by H(2)O(2) treatment. Interacts with a G1/S-specific cyclin E-CDK2 complex. Interacts with AURKA, CDK5R1 (p35 form) and CDK5 and HIF1A. Interacts with the tRNA ligase SARS1; recruited to the VEGFA promoter via interaction with SARS1. Interacts with BEX4; negatively regulates alpha-tubulin deacetylation by SIRT2. The cofactor is Zn(2+). Post-translationally, phosphorylated at phosphoserine and phosphothreonine. Phosphorylated at Ser-330 by a mitotic kinase CDK1/cyclin B at the G2/M transition; phosphorylation regulates the delay in cell-cycle progression. Phosphorylated at Ser-330 by a mitotic kinase G1/S-specific cyclin E/Cdk2 complex; phosphorylation inactivates SIRT2-mediated alpha-tubulin deacetylation and thereby negatively regulates cell adhesion, cell migration and neurite outgrowth during neuronal differentiation. Phosphorylated by cyclin A/Cdk2 and p35-Cdk5 complexes and to a lesser extent by the cyclin D3/Cdk4 and cyclin B/Cdk1, in vitro. Dephosphorylated at Ser-330 by CDC14A and CDC14B around early anaphase. In terms of processing, acetylated by EP300; acetylation leads both to the decreased of SIRT2-mediated alpha-tubulin deacetylase activity and SIRT2-mediated down-regulation of TP53 transcriptional activity. Ubiquitinated. Expressed in the cerebellum, cerebral cortex and cervival spinal cord. Expressed in Purkinje cells, oligodendrocytes and Schwann cells (at protein level). Expressed in the central nervous system (CNS).

The protein localises to the nucleus. It is found in the cytoplasm. Its subcellular location is the perinuclear region. It localises to the cytoskeleton. The protein resides in the microtubule organizing center. The protein localises to the centrosome. It is found in the centriole. Its subcellular location is the spindle. It localises to the midbody. The protein resides in the chromosome. The protein localises to the perikaryon. It is found in the cell projection. Its subcellular location is the growth cone. It localises to the myelin membrane. The enzyme catalyses N(6)-acetyl-L-lysyl-[protein] + NAD(+) + H2O = 2''-O-acetyl-ADP-D-ribose + nicotinamide + L-lysyl-[protein]. The catalysed reaction is N(6)-tetradecanoyl-L-lysyl-[protein] + NAD(+) + H2O = 2''-O-tetradecanoyl-ADP-D-ribose + nicotinamide + L-lysyl-[protein]. It carries out the reaction N(6)-hexadecanoyl-L-lysyl-[protein] + NAD(+) + H2O = 2''-O-hexadecanoyl-ADP-D-ribose + nicotinamide + L-lysyl-[protein]. Inhibited by Sirtinol, A3 and M15 small molecules. Inhibited by nicotinamide. Inhibited by a macrocyclic peptide inhibitor S2iL5. Inhibited by EP300-induced acetylation. Functionally, NAD-dependent protein deacetylase, which deacetylates internal lysines on histone and alpha-tubulin as well as many other proteins such as key transcription factors. Participates in the modulation of multiple and diverse biological processes such as cell cycle control, genomic integrity, microtubule dynamics, cell differentiation, metabolic networks, and autophagy. Plays a major role in the control of cell cycle progression and genomic stability. Functions in the antephase checkpoint preventing precocious mitotic entry in response to microtubule stress agents, and hence allowing proper inheritance of chromosomes. Positively regulates the anaphase promoting complex/cyclosome (APC/C) ubiquitin ligase complex activity by deacetylating CDC20 and FZR1, then allowing progression through mitosis. Associates both with chromatin at transcriptional start sites (TSSs) and enhancers of active genes. Plays a role in cell cycle and chromatin compaction through epigenetic modulation of the regulation of histone H4 'Lys-20' methylation (H4K20me1) during early mitosis. Specifically deacetylates histone H4 at 'Lys-16' (H4K16ac) between the G2/M transition and metaphase enabling H4K20me1 deposition by KMT5A leading to ulterior levels of H4K20me2 and H4K20me3 deposition throughout cell cycle, and mitotic S-phase progression. Deacetylates KMT5A modulating KMT5A chromatin localization during the mitotic stress response. Also deacetylates histone H3 at 'Lys-57' (H3K56ac) during the mitotic G2/M transition. During oocyte meiosis progression, may deacetylate histone H4 at 'Lys-16' (H4K16ac) and alpha-tubulin, regulating spindle assembly and chromosome alignment by influencing microtubule dynamics and kinetochore function. Deacetylates histone H4 at 'Lys-16' (H4K16ac) at the VEGFA promoter and thereby contributes to regulate expression of VEGFA, a key regulator of angiogenesis. Deacetylates alpha-tubulin at 'Lys-40' and hence controls neuronal motility, oligodendroglial cell arbor projection processes and proliferation of non-neuronal cells. Phosphorylation at Ser-368 by a G1/S-specific cyclin E-CDK2 complex inactivates SIRT2-mediated alpha-tubulin deacetylation, negatively regulating cell adhesion, cell migration and neurite outgrowth during neuronal differentiation. Deacetylates PARD3 and participates in the regulation of Schwann cell peripheral myelination formation during early postnatal development and during postinjury remyelination. Involved in several cellular metabolic pathways. Plays a role in the regulation of blood glucose homeostasis by deacetylating and stabilizing phosphoenolpyruvate carboxykinase PCK1 activity in response to low nutrient availability. Acts as a key regulator in the pentose phosphate pathway (PPP) by deacetylating and activating the glucose-6-phosphate G6PD enzyme, and therefore, stimulates the production of cytosolic NADPH to counteract oxidative damage. Maintains energy homeostasis in response to nutrient deprivation as well as energy expenditure by inhibiting adipogenesis and promoting lipolysis. Attenuates adipocyte differentiation by deacetylating and promoting FOXO1 interaction to PPARG and subsequent repression of PPARG-dependent transcriptional activity. Plays a role in the regulation of lysosome-mediated degradation of protein aggregates by autophagy in neuronal cells. Deacetylates FOXO1 in response to oxidative stress or serum deprivation, thereby negatively regulating FOXO1-mediated autophagy. Deacetylates a broad range of transcription factors and co-regulators regulating target gene expression. Deacetylates transcriptional factor FOXO3 stimulating the ubiquitin ligase SCF(SKP2)-mediated FOXO3 ubiquitination and degradation. Deacetylates HIF1A and therefore promotes HIF1A degradation and inhibition of HIF1A transcriptional activity in tumor cells in response to hypoxia. Deacetylates RELA in the cytoplasm inhibiting NF-kappaB-dependent transcription activation upon TNF-alpha stimulation. Inhibits transcriptional activation by deacetylating p53/TP53 and EP300. Also deacetylates EIF5A. Functions as a negative regulator on oxidative stress-tolerance in response to anoxia-reoxygenation conditions. Plays a role as tumor suppressor. In addition to protein deacetylase activity, also has activity toward long-chain fatty acyl groups and mediates protein-lysine demyristoylation and depalmitoylation of target proteins, such as ARF6 and KRAS, thereby regulating their association with membranes. The protein is NAD-dependent protein deacetylase sirtuin-2 (Sirt2) of Rattus norvegicus (Rat).